The chain runs to 127 residues: Calcium-binding protein PBP1 (127 aa).

The span at 1–18 (MASPKSSTRPNQENQEPQ) shows a compositional bias: polar residues. A disordered region spans residues 1-20 (MASPKSSTRPNQENQEPQFQ). The EF-hand domain maps to 72 to 107 (LTDDDVRYMINEGDFDRDGALNQMEFCVLMFRLSPE). Ca(2+) is bound by residues Asp-85, Asp-87, Asp-89, and Glu-96.

As to quaternary structure, interacts with PID.

Its function is as follows. Potential calcium sensor that binds calcium in vitro. The sequence is that of Calcium-binding protein PBP1 (PBP1) from Arabidopsis thaliana (Mouse-ear cress).